The sequence spans 209 residues: Translation initiation factor IF-3 (209 aa).

This sequence belongs to the IF-3 family. Monomer.

Its subcellular location is the cytoplasm. IF-3 binds to the 30S ribosomal subunit and shifts the equilibrium between 70S ribosomes and their 50S and 30S subunits in favor of the free subunits, thus enhancing the availability of 30S subunits on which protein synthesis initiation begins. This is Translation initiation factor IF-3 from Chlorobium phaeobacteroides (strain DSM 266 / SMG 266 / 2430).